We begin with the raw amino-acid sequence, 314 residues long: Protoheme IX farnesyltransferase 2 (314 aa).

The next 9 helical transmembrane spans lie at 32 to 49 (VMSL…AAPV), 54 to 76 (LLAV…LNMW), 98 to 118 (IQPH…VMTL), 120 to 140 (VLVN…YAVV), 153 to 173 (IVIG…AVTG), 180 to 200 (IVLF…LALF), 226 to 246 (IFAY…LGYT), 249 to 269 (FYGV…WKVL), and 285 to 305 (FAYS…DSVV).

This sequence belongs to the UbiA prenyltransferase family. Protoheme IX farnesyltransferase subfamily.

It localises to the cell inner membrane. It carries out the reaction heme b + (2E,6E)-farnesyl diphosphate + H2O = Fe(II)-heme o + diphosphate. The protein operates within porphyrin-containing compound metabolism; heme O biosynthesis; heme O from protoheme: step 1/1. Functionally, converts heme B (protoheme IX) to heme O by substitution of the vinyl group on carbon 2 of heme B porphyrin ring with a hydroxyethyl farnesyl side group. The polypeptide is Protoheme IX farnesyltransferase 2 (Mesorhizobium japonicum (strain LMG 29417 / CECT 9101 / MAFF 303099) (Mesorhizobium loti (strain MAFF 303099))).